Consider the following 221-residue polypeptide: Cytochrome c biogenesis ATP-binding export protein CcmA (221 aa).

One can recognise an ABC transporter domain in the interval 14–221 (LACHDVSCLR…FDLLDESHFS (208 aa)). 46-53 (GANGIGKS) provides a ligand contact to ATP.

This sequence belongs to the ABC transporter superfamily. CcmA exporter (TC 3.A.1.107) family. As to quaternary structure, the complex is composed of two ATP-binding proteins (CcmA) and two transmembrane proteins (CcmB).

It localises to the cell inner membrane. It catalyses the reaction heme b(in) + ATP + H2O = heme b(out) + ADP + phosphate + H(+). Its function is as follows. Part of the ABC transporter complex CcmAB involved in the biogenesis of c-type cytochromes; once thought to export heme, this seems not to be the case, but its exact role is uncertain. Responsible for energy coupling to the transport system. This Zymomonas mobilis subsp. mobilis (strain ATCC 31821 / ZM4 / CP4) protein is Cytochrome c biogenesis ATP-binding export protein CcmA.